Here is a 1323-residue protein sequence, read N- to C-terminus: Sister chromatid cohesion protein PDS5 homolog A-B (1323 aa).

An HEAT repeat occupies 385–421 (FLVNDQLLGFVRERTLDKRWRVRKEAMMGLAQLYKKY). The interval 1138 to 1323 (PLNATGRRPY…TAQRQIDLHR (186 aa)) is disordered. A compositionally biased stretch (low complexity) spans 1153 to 1165 (SEISNNVSINSES). Polar residues-rich tracts occupy residues 1166-1176 (DASVANRQSSE) and 1210-1220 (LDQTAPSNTGT). The span at 1235 to 1246 (NIRKESEEKKVD) shows a compositional bias: basic and acidic residues.

Interacts with the cohesin complex. Binds chromatin in a cohesin-dependent manner.

Its subcellular location is the nucleus. In terms of biological role, may regulate sister chromatid cohesion during mitosis and couple it to DNA replication. The polypeptide is Sister chromatid cohesion protein PDS5 homolog A-B (pds5a-b) (Xenopus laevis (African clawed frog)).